Reading from the N-terminus, the 239-residue chain is Proteasome subunit beta (239 aa).

Residues 1–16 (MRQPDSSLPRTGQDHT) show a composition bias toward polar residues. A disordered region spans residues 1–32 (MRQPDSSLPRTGQDHTLSPYEPELGEVPSNDL). The propeptide at 1-44 (MRQPDSSLPRTGQDHTLSPYEPELGEVPSNDLSMADLDNVNKTG) is removed in mature form; by autocatalysis. T45 acts as the Nucleophile in catalysis.

This sequence belongs to the peptidase T1B family. As to quaternary structure, the 20S proteasome core is composed of 14 alpha and 14 beta subunits that assemble into four stacked heptameric rings, resulting in a barrel-shaped structure. The two inner rings, each composed of seven catalytic beta subunits, are sandwiched by two outer rings, each composed of seven alpha subunits. The catalytic chamber with the active sites is on the inside of the barrel. Has a gated structure, the ends of the cylinder being occluded by the N-termini of the alpha-subunits. Is capped at one or both ends by the proteasome regulatory ATPase, PAN.

It is found in the cytoplasm. The catalysed reaction is Cleavage of peptide bonds with very broad specificity.. Its activity is regulated as follows. The formation of the proteasomal ATPase PAN-20S proteasome complex, via the docking of the C-termini of PAN into the intersubunit pockets in the alpha-rings, triggers opening of the gate for substrate entry. Interconversion between the open-gate and close-gate conformations leads to a dynamic regulation of the 20S proteasome proteolysis activity. Its function is as follows. Component of the proteasome core, a large protease complex with broad specificity involved in protein degradation. This is Proteasome subunit beta from Natronomonas pharaonis (strain ATCC 35678 / DSM 2160 / CIP 103997 / JCM 8858 / NBRC 14720 / NCIMB 2260 / Gabara) (Halobacterium pharaonis).